A 200-amino-acid polypeptide reads, in one-letter code: MTMMISEVTFNKIFPHAVKGVYQAISAQIEKAGCVNKMQQAMFLAQCGHESGGFIRFKENLNYSWLGLSQTFRKYFPDPLTAKKYERKPELIANRIYANRLGNGDEKSGDGWKYRGRGLIQITGKDNYAAFRKWLGRDIEPEDVAGNLDLSVKTAVWYWKCYELAELNSVEKVTRRINGGLNGIDERCKLYRALMVTDND.

Belongs to the glycosyl hydrolase 19 family.

The chain is Glycosyl hydrolase family 19 domain-containing protein HI_1415 from Haemophilus influenzae (strain ATCC 51907 / DSM 11121 / KW20 / Rd).